Consider the following 215-residue polypeptide: Protein Thf1 (215 aa).

Residues 188 to 209 adopt a coiled-coil conformation; it reads IELVQETIAAERRKKERRQAEQ.

This sequence belongs to the THF1 family.

Its function is as follows. May be involved in photosynthetic membrane biogenesis. This is Protein Thf1 from Synechococcus sp. (strain CC9902).